Here is a 459-residue protein sequence, read N- to C-terminus: Putrescine aminotransferase (459 aa).

Residues 150 to 151 and Gln-274 contribute to the pyridoxal 5'-phosphate site; that span reads GT. Lys-300 bears the N6-(pyridoxal phosphate)lysine mark. Position 332 (Thr-332) interacts with pyridoxal 5'-phosphate.

Belongs to the class-III pyridoxal-phosphate-dependent aminotransferase family. Putrescine aminotransferase subfamily. Requires pyridoxal 5'-phosphate as cofactor.

It carries out the reaction an alkane-alpha,omega-diamine + 2-oxoglutarate = an omega-aminoaldehyde + L-glutamate. The enzyme catalyses putrescine + 2-oxoglutarate = 1-pyrroline + L-glutamate + H2O. The catalysed reaction is cadaverine + 2-oxoglutarate = 5-aminopentanal + L-glutamate. The protein operates within amine and polyamine degradation; putrescine degradation; 4-aminobutanal from putrescine (transaminase route): step 1/1. Catalyzes the aminotransferase reaction from putrescine to 2-oxoglutarate, leading to glutamate and 4-aminobutanal, which spontaneously cyclizes to form 1-pyrroline. This is the first step in one of two pathways for putrescine degradation, where putrescine is converted into 4-aminobutanoate (gamma-aminobutyrate or GABA) via 4-aminobutanal. Also functions as a cadaverine transaminase in a a L-lysine degradation pathway to succinate that proceeds via cadaverine, glutarate and L-2-hydroxyglutarate. This chain is Putrescine aminotransferase, found in Escherichia coli O6:K15:H31 (strain 536 / UPEC).